The chain runs to 152 residues: Transcriptional regulator MraZ (152 aa).

SpoVT-AbrB domains lie at 5–52 and 81–124; these read ASAI…PLEA and AHEC…DEAA.

Belongs to the MraZ family. As to quaternary structure, forms oligomers.

The protein resides in the cytoplasm. It is found in the nucleoid. The sequence is that of Transcriptional regulator MraZ from Shewanella loihica (strain ATCC BAA-1088 / PV-4).